The chain runs to 280 residues: Rhomboid-like protein 11, chloroplastic (280 aa).

Residues 1-57 (MSQLLHLHRLSLPQSSLRFRFPPLHRRRAASSPTNSTQPPLQFRPLTVSRSQITCRF) constitute a chloroplast transit peptide. At 58-82 (SQSDITPQFELDKAKDNRKPQKRAN) the chain is on the stromal side. A helical membrane pass occupies residues 83-103 (GIFWIILINLGIYLADHFFQV). The Chloroplast intermembrane portion of the chain corresponds to 104–117 (RGIKSLYLYHNFPA). A helical membrane pass occupies residues 118–140 (WYQFVTATFCHANWNHLSSNLFF). The Stromal portion of the chain corresponds to 141–154 (LYIFGKLVEEEEGN). A helical membrane pass occupies residues 155-175 (FGLWLSYLFTGVGANLVSWLV). At 176 to 178 (LPR) the chain is on the chloroplast intermembrane side. Residues 179–199 (NAVSVGASGAVFGLFAISVLV) traverse the membrane as a helical segment. Catalysis depends on serine 186, which acts as the Nucleophile. The Stromal portion of the chain corresponds to 200 to 243 (KMSWDWRKILEVLILGQFVIERVMEAAQASAGLSGTIYGGYSLQ). The helical transmembrane segment at 244-264 (TVNHIAHLSGALVGVVLVWLL) threads the bilayer. Catalysis depends on histidine 250, which acts as the Charge relay system. At 265 to 280 (SKFPSASMDQDVKKSS) the chain is on the chloroplast intermembrane side.

Belongs to the peptidase S54 family. Homooligomer.

Its subcellular location is the plastid. The protein resides in the chloroplast inner membrane. Rhomboid-type serine protease that catalyzes intramembrane proteolysis. May be involved in TIC22 processing during its import. This chain is Rhomboid-like protein 11, chloroplastic, found in Arabidopsis thaliana (Mouse-ear cress).